The chain runs to 193 residues: Ion-translocating oxidoreductase complex subunit A (193 aa).

6 consecutive transmembrane segments (helical) span residues 5–25 (LLLFIGTVLVNNFVLVKFLGL), 47–67 (FVITLASICAWLVNHLILLPL), 72–92 (LRTMAYILVIAVVVQFTEMVV), 102–122 (LLGIFLPLITTNCAVLGVPLL), 134–154 (AIYGFSASIGFSLVMVLFAGV), and 171–191 (SIALVTAGLMALAFMGFAGLV).

The protein belongs to the NqrDE/RnfAE family. In terms of assembly, the complex is composed of six subunits: RnfA, RnfB, RnfC, RnfD, RnfE and RnfG.

It is found in the cell inner membrane. Functionally, part of a membrane-bound complex that couples electron transfer with translocation of ions across the membrane. This Erwinia tasmaniensis (strain DSM 17950 / CFBP 7177 / CIP 109463 / NCPPB 4357 / Et1/99) protein is Ion-translocating oxidoreductase complex subunit A.